We begin with the raw amino-acid sequence, 257 residues long: E3 ubiquitin-protein ligase RNF170 (257 aa).

The Lumenal portion of the chain corresponds to 1-24 (MADNQEERPHFPLDEGSIIEGVSD). Residues 25–45 (QVIVVVLLSFVAVGSLIYLLL) form a helical membrane-spanning segment. Topologically, residues 46–200 (RNDEQNIHPE…GGLFWMFRIR (155 aa)) are cytoplasmic. The RING-type zinc finger occupies 87–130 (CPVCLQQATFPVETNCGHLFCGSCIIAYWRYGTWLGAINCPICR). Residues 201–221 (IVLCLLGALLYLVSPLDIIPE) form a helical membrane-spanning segment. A topological domain (lumenal) is located at residue A222. The helical transmembrane segment at 223–243 (LFGILGFLDDLFVLFLLLIYI) threads the bilayer. Over 244-257 (SIMYREVVTQRLYR) the chain is Cytoplasmic.

Its subcellular location is the endoplasmic reticulum membrane. It carries out the reaction S-ubiquitinyl-[E2 ubiquitin-conjugating enzyme]-L-cysteine + [acceptor protein]-L-lysine = [E2 ubiquitin-conjugating enzyme]-L-cysteine + N(6)-ubiquitinyl-[acceptor protein]-L-lysine.. Its pathway is protein modification; protein ubiquitination. Functionally, E3 ubiquitin-protein ligase that plays an essential role in stimulus-induced inositol 1,4,5-trisphosphate receptor (ITPR) ubiquitination and degradation via the endoplasmic reticulum-associated degradation (ERAD) pathway. Also involved in ITPR turnover in resting cells. This chain is E3 ubiquitin-protein ligase RNF170 (rnf170), found in Xenopus laevis (African clawed frog).